The primary structure comprises 188 residues: Elongation factor P (188 aa).

It belongs to the elongation factor P family.

Its subcellular location is the cytoplasm. The protein operates within protein biosynthesis; polypeptide chain elongation. Its function is as follows. Involved in peptide bond synthesis. Stimulates efficient translation and peptide-bond synthesis on native or reconstituted 70S ribosomes in vitro. Probably functions indirectly by altering the affinity of the ribosome for aminoacyl-tRNA, thus increasing their reactivity as acceptors for peptidyl transferase. The polypeptide is Elongation factor P (Rickettsia rickettsii (strain Iowa)).